We begin with the raw amino-acid sequence, 287 residues long: 4-hydroxybenzoate octaprenyltransferase (287 aa).

9 helical membrane-spanning segments follow: residues 19-39, 43-63, 94-114, 118-138, 142-162, 167-187, 209-229, 235-255, and 263-283; these read PIGTLLLLWPTLWALWLASSG, LQMLMIFIAGTFLMRSAGCAI, VVVAGVLALIAFLLIQPLNIF, LSVLALLVAFIYPFTKRFLAI, VLGIAFGFGIPMAYAAVLDFI, WVLFVGNIFWAIAYDTAYAMV, VLAIAFSYGVLFVSQLWVAHL, YFLIGWGAALGCAIYQLKLVS, and FLAFRHNNWLGGFLFLGIVLG.

It belongs to the UbiA prenyltransferase family. Requires Mg(2+) as cofactor.

It localises to the cell inner membrane. The catalysed reaction is all-trans-octaprenyl diphosphate + 4-hydroxybenzoate = 4-hydroxy-3-(all-trans-octaprenyl)benzoate + diphosphate. It participates in cofactor biosynthesis; ubiquinone biosynthesis. In terms of biological role, catalyzes the prenylation of para-hydroxybenzoate (PHB) with an all-trans polyprenyl group. Mediates the second step in the final reaction sequence of ubiquinone-8 (UQ-8) biosynthesis, which is the condensation of the polyisoprenoid side chain with PHB, generating the first membrane-bound Q intermediate 3-octaprenyl-4-hydroxybenzoate. The sequence is that of 4-hydroxybenzoate octaprenyltransferase from Polynucleobacter asymbioticus (strain DSM 18221 / CIP 109841 / QLW-P1DMWA-1) (Polynucleobacter necessarius subsp. asymbioticus).